We begin with the raw amino-acid sequence, 110 residues long: MENEATVPAGREASMTETNETRRYLVTGRVQGVGFRWFVEHAAVQLGLAGWVRNRADGRVEVLASGPRQKLHDLYVELKKGPRASRVDNVEVEDAAPETNLKSFRIEGTW.

Positions 21 to 108 (TRRYLVTGRV…TNLKSFRIEG (88 aa)) constitute an Acylphosphatase-like domain. Catalysis depends on residues arginine 36 and asparagine 54.

It belongs to the acylphosphatase family.

The enzyme catalyses an acyl phosphate + H2O = a carboxylate + phosphate + H(+). This Koribacter versatilis (strain Ellin345) protein is Acylphosphatase (acyP).